The following is a 129-amino-acid chain: Small ribosomal subunit protein uS11 (129 aa).

Belongs to the universal ribosomal protein uS11 family. As to quaternary structure, part of the 30S ribosomal subunit. Interacts with proteins S7 and S18. Binds to IF-3.

Located on the platform of the 30S subunit, it bridges several disparate RNA helices of the 16S rRNA. Forms part of the Shine-Dalgarno cleft in the 70S ribosome. The sequence is that of Small ribosomal subunit protein uS11 from Azoarcus sp. (strain BH72).